The primary structure comprises 232 residues: Large ribosomal subunit protein uL1 (232 aa).

Belongs to the universal ribosomal protein uL1 family. In terms of assembly, part of the 50S ribosomal subunit.

Its function is as follows. Binds directly to 23S rRNA. The L1 stalk is quite mobile in the ribosome, and is involved in E site tRNA release. In terms of biological role, protein L1 is also a translational repressor protein, it controls the translation of the L11 operon by binding to its mRNA. The polypeptide is Large ribosomal subunit protein uL1 (Thermosipho africanus (strain TCF52B)).